Reading from the N-terminus, the 260-residue chain is Hydroxyethylthiazole kinase (260 aa).

Methionine 49 is a substrate binding site. 2 residues coordinate ATP: arginine 124 and threonine 170. Residue glycine 197 participates in substrate binding.

Belongs to the Thz kinase family. Mg(2+) serves as cofactor.

It carries out the reaction 5-(2-hydroxyethyl)-4-methylthiazole + ATP = 4-methyl-5-(2-phosphooxyethyl)-thiazole + ADP + H(+). It functions in the pathway cofactor biosynthesis; thiamine diphosphate biosynthesis; 4-methyl-5-(2-phosphoethyl)-thiazole from 5-(2-hydroxyethyl)-4-methylthiazole: step 1/1. Functionally, catalyzes the phosphorylation of the hydroxyl group of 4-methyl-5-beta-hydroxyethylthiazole (THZ). In Yersinia enterocolitica serotype O:8 / biotype 1B (strain NCTC 13174 / 8081), this protein is Hydroxyethylthiazole kinase.